The primary structure comprises 284 residues: Tryptophan synthase alpha chain (284 aa).

Catalysis depends on proton acceptor residues glutamate 59 and aspartate 70.

Belongs to the TrpA family. In terms of assembly, tetramer of two alpha and two beta chains.

It catalyses the reaction (1S,2R)-1-C-(indol-3-yl)glycerol 3-phosphate + L-serine = D-glyceraldehyde 3-phosphate + L-tryptophan + H2O. The protein operates within amino-acid biosynthesis; L-tryptophan biosynthesis; L-tryptophan from chorismate: step 5/5. Functionally, the alpha subunit is responsible for the aldol cleavage of indoleglycerol phosphate to indole and glyceraldehyde 3-phosphate. This chain is Tryptophan synthase alpha chain, found in Azospirillum brasilense.